The primary structure comprises 395 residues: Immunoglobulin heavy constant gamma 2 (395 aa).

The tract at residues 1–98 is CH1; that stretch reads ASTKGPSVFP…PSNTKVDKTV (98 aa). The Extracellular segment spans residues 1-346; the sequence is ASTKGPSVFP…DGELDGLWTT (346 aa). 3 Ig-like domains span residues 6-99, 117-216, and 225-321; these read PSVF…KTVE, PSVF…KTIS, and PQVY…KSLS. A disulfide bridge links C27 with C83. The tract at residues 99-110 is hinge; the sequence is ERKCCVECPPCP. A CH2 region spans residues 111–219; it reads APPVAGPSVF…PIEKTISKTK (109 aa). Cystine bridges form between C140-C200 and C246-C304. N-linked (GlcNAc...) (complex) asparagine glycosylation is present at N176. The segment at 220 to 326 is CH3; it reads GQPREPQVYT…QKSLSLSPEL (107 aa). A helical transmembrane segment spans residues 347–367; that stretch reads ITIFITLFLLSVCYSATITFF. Topologically, residues 368 to 395 are cytoplasmic; the sequence is KVKWIFSSVVDLKQTIVPDYRNMIRQGA.

In terms of assembly, immunoglobulins are composed of two identical heavy chains and two identical light chains; disulfide-linked. In terms of processing, glycosylation on Asn-176 is required for interaction with Fc receptors and ability to activate the complement pathway. (Microbial infection) Deglycosylation on Asn-176 by S.pyogenes EndoS or Endos2 endoglucosidases prevents interaction between immunoglobulin-gamma (IgG) and Fc receptors, impairing ability to activate the complement pathway.

It localises to the secreted. The protein localises to the cell membrane. In terms of biological role, constant region of immunoglobulin heavy chains. Immunoglobulins, also known as antibodies, are membrane-bound or secreted glycoproteins produced by B lymphocytes. In the recognition phase of humoral immunity, the membrane-bound immunoglobulins serve as receptors which, upon binding of a specific antigen, trigger the clonal expansion and differentiation of B lymphocytes into immunoglobulins-secreting plasma cells. Secreted immunoglobulins mediate the effector phase of humoral immunity, which results in the elimination of bound antigens. The antigen binding site is formed by the variable domain of one heavy chain, together with that of its associated light chain. Thus, each immunoglobulin has two antigen binding sites with remarkable affinity for a particular antigen. The variable domains are assembled by a process called V-(D)-J rearrangement and can then be subjected to somatic hypermutations which, after exposure to antigen and selection, allow affinity maturation for a particular antigen. The chain is Immunoglobulin heavy constant gamma 2 from Homo sapiens (Human).